A 323-amino-acid chain; its full sequence is Galectin-4 (323 aa).

Galectin domains lie at 19–150 (YYQP…INFI) and 194–323 (YFGR…YVQI). Residue 256–262 (WGSEEKK) participates in a beta-D-galactoside binding. Phosphoserine is present on Ser-258.

As to quaternary structure, monomer.

Functionally, galectin that binds lactose and a related range of sugars. May be involved in the assembly of adherens junctions. This Homo sapiens (Human) protein is Galectin-4 (LGALS4).